A 357-amino-acid polypeptide reads, in one-letter code: Chorismate synthase (357 aa).

An NADP(+)-binding site is contributed by R46. FMN-binding positions include 123 to 125 (RSS), 235 to 236 (NA), G275, 290 to 294 (KPTPS), and R316.

It belongs to the chorismate synthase family. Homotetramer. It depends on FMNH2 as a cofactor.

It catalyses the reaction 5-O-(1-carboxyvinyl)-3-phosphoshikimate = chorismate + phosphate. It functions in the pathway metabolic intermediate biosynthesis; chorismate biosynthesis; chorismate from D-erythrose 4-phosphate and phosphoenolpyruvate: step 7/7. Its function is as follows. Catalyzes the anti-1,4-elimination of the C-3 phosphate and the C-6 proR hydrogen from 5-enolpyruvylshikimate-3-phosphate (EPSP) to yield chorismate, which is the branch point compound that serves as the starting substrate for the three terminal pathways of aromatic amino acid biosynthesis. This reaction introduces a second double bond into the aromatic ring system. This chain is Chorismate synthase, found in Nitratiruptor sp. (strain SB155-2).